Reading from the N-terminus, the 116-residue chain is CDKN2AIP N-terminal-like protein (116 aa).

At methionine 1 the chain carries N-acetylmethionine. The XRN2-binding (XTBD) domain maps to 24–116 (AEQFRSYSES…RSELMKKHQS (93 aa)).

The protein belongs to the CARF family. As to quaternary structure, interacts with XRN2; the interaction is direct.

This Rattus norvegicus (Rat) protein is CDKN2AIP N-terminal-like protein (Cdkn2aipnl).